A 600-amino-acid chain; its full sequence is Proline dehydrogenase 1, mitochondrial (600 aa).

Residues 155–177 form a disordered region; the sequence is AEHKEMESCTSAAERDGSGTNKR. 2 positions are modified to N6-acetyllysine: Lys368 and Lys486.

The protein belongs to the proline oxidase family. FAD serves as cofactor. Expressed in lung, skeletal muscle and brain, to a lesser extent in heart and kidney, and weakly in liver, placenta and pancreas.

It localises to the mitochondrion matrix. The catalysed reaction is L-proline + a quinone = (S)-1-pyrroline-5-carboxylate + a quinol + H(+). The protein operates within amino-acid degradation; L-proline degradation into L-glutamate; L-glutamate from L-proline: step 1/2. Its function is as follows. Converts proline to delta-1-pyrroline-5-carboxylate. The protein is Proline dehydrogenase 1, mitochondrial of Homo sapiens (Human).